Consider the following 88-residue polypeptide: Large ribosomal subunit protein bL27 (88 aa).

A disordered region spans residues M1–L21.

The protein belongs to the bacterial ribosomal protein bL27 family.

This chain is Large ribosomal subunit protein bL27, found in Parasynechococcus marenigrum (strain WH8102).